The following is a 269-amino-acid chain: 3-methyl-2-oxobutanoate hydroxymethyltransferase (269 aa).

Mg(2+) contacts are provided by aspartate 46 and aspartate 85. 3-methyl-2-oxobutanoate contacts are provided by residues 46–47 (DS), aspartate 85, and lysine 114. Glutamate 116 contributes to the Mg(2+) binding site. Glutamate 183 serves as the catalytic Proton acceptor.

This sequence belongs to the PanB family. Homodecamer; pentamer of dimers. Mg(2+) is required as a cofactor.

It localises to the cytoplasm. It carries out the reaction 3-methyl-2-oxobutanoate + (6R)-5,10-methylene-5,6,7,8-tetrahydrofolate + H2O = 2-dehydropantoate + (6S)-5,6,7,8-tetrahydrofolate. It functions in the pathway cofactor biosynthesis; (R)-pantothenate biosynthesis; (R)-pantoate from 3-methyl-2-oxobutanoate: step 1/2. In terms of biological role, catalyzes the reversible reaction in which hydroxymethyl group from 5,10-methylenetetrahydrofolate is transferred onto alpha-ketoisovalerate to form ketopantoate. In Methylococcus capsulatus (strain ATCC 33009 / NCIMB 11132 / Bath), this protein is 3-methyl-2-oxobutanoate hydroxymethyltransferase.